A 218-amino-acid chain; its full sequence is Zinc finger BED domain-containing protein 2 (218 aa).

Residues 1-11 (MMRREDEEEEG) show a composition bias toward acidic residues. The disordered stretch occupies residues 1–24 (MMRREDEEEEGTMMKAKGDLEMKE). The segment at 52–113 (TRFSEAWEYF…SMHREELEKS (62 aa)) adopts a BED-type zinc-finger fold. Positions 78, 81, 101, and 106 each coordinate Zn(2+). The disordered stretch occupies residues 104–137 (SMHREELEKSGHGQAGQRQDPRPHGPQLPTGIEG). Over residues 105–114 (MHREELEKSG) the composition is skewed to basic and acidic residues.

As to expression, expressed in keratinocytes.

It localises to the nucleus. Functionally, transcriptional regulator which has intrinsic repressor activity and which competes with the transcriptional activator IRF1 for binding to the 5'-[CA]GAA[AC]C[CT]-3' consensus sequence in gene promoters. May thereby play a role in keratinocyte differentiation. The protein is Zinc finger BED domain-containing protein 2 (ZBED2) of Homo sapiens (Human).